The following is a 938-amino-acid chain: Protocadherin gamma-C4 (938 aa).

The signal sequence occupies residues 1–29 (MLRKVRSWTEIWRWATLLFLFYHLGYVCG). Cadherin domains lie at 30–133 (QIRY…APRF), 134–242 (PRQQ…APAF), 243–350 (QQSS…APYI), 351–455 (TVTS…PPSF), 456–565 (FQRS…APAV), and 572–676 (PGSL…VPDL). Topologically, residues 30–692 (QIRYPVPEES…REGESRLTLY (663 aa)) are extracellular. 3 N-linked (GlcNAc...) asparagine glycosylation sites follow: N265, N276, and N444. A helical membrane pass occupies residues 693–713 (LAVSLVAICFVSFGSFVALLS). The Cytoplasmic segment spans residues 714–938 (KCLRGAACGV…KKKSGKKEKK (225 aa)). Disordered regions lie at residues 791–847 (PSAP…WPNN) and 908–938 (ATLT…KEKK). Residues 822 to 847 (WRFSQAQRPGTSGSQNGDDTGTWPNN) are compositionally biased toward polar residues. Basic residues predominate over residues 928–938 (NKKKSGKKEKK).

The protein localises to the cell membrane. Functionally, potential calcium-dependent cell-adhesion protein. May be involved in the establishment and maintenance of specific neuronal connections in the brain. The chain is Protocadherin gamma-C4 (PCDHGC4) from Homo sapiens (Human).